The primary structure comprises 294 residues: 4-hydroxy-tetrahydrodipicolinate synthase (294 aa).

Thr-44 contacts pyruvate. The active-site Proton donor/acceptor is the Tyr-132. The active-site Schiff-base intermediate with substrate is Lys-161. Ile-206 lines the pyruvate pocket.

The protein belongs to the DapA family. As to quaternary structure, homotetramer; dimer of dimers.

It is found in the cytoplasm. The catalysed reaction is L-aspartate 4-semialdehyde + pyruvate = (2S,4S)-4-hydroxy-2,3,4,5-tetrahydrodipicolinate + H2O + H(+). It participates in amino-acid biosynthesis; L-lysine biosynthesis via DAP pathway; (S)-tetrahydrodipicolinate from L-aspartate: step 3/4. Its activity is regulated as follows. Is not inhibited by (S)-lysine, in contrast to E.coli DapA. Catalyzes the condensation of (S)-aspartate-beta-semialdehyde [(S)-ASA] and pyruvate to 4-hydroxy-tetrahydrodipicolinate (HTPA). The chain is 4-hydroxy-tetrahydrodipicolinate synthase from Thermotoga maritima (strain ATCC 43589 / DSM 3109 / JCM 10099 / NBRC 100826 / MSB8).